We begin with the raw amino-acid sequence, 207 residues long: MYYVIASLLGYIFGCIHGSQIVGKLKGINIKDGGVKNAGASNTTILLGWKYGIVVALIDIFKATAAIFLLLILLQGNAIPTQEQHIYIYLTALFVIIGHNYPITMQFSGGKGTASLVGALIAIDWRIALIGIGVLILFTIATDYLAVGVLSMYISFLITTYYIFGLAPFFIVVGLSVLSIYKHIENYKRIIGKEETKLSSMFGKKAS.

The next 5 helical transmembrane spans lie at 3–23 (YVIASLLGYIFGCIHGSQIVG), 53–73 (IVVALIDIFKATAAIFLLLIL), 85–105 (HIYIYLTALFVIIGHNYPITM), 127–147 (IALIGIGVLILFTIATDYLAV), and 154–174 (ISFLITTYYIFGLAPFFIVVG).

The protein belongs to the PlsY family. Probably interacts with PlsX.

It localises to the cell membrane. It carries out the reaction an acyl phosphate + sn-glycerol 3-phosphate = a 1-acyl-sn-glycero-3-phosphate + phosphate. It participates in lipid metabolism; phospholipid metabolism. In terms of biological role, catalyzes the transfer of an acyl group from acyl-phosphate (acyl-PO(4)) to glycerol-3-phosphate (G3P) to form lysophosphatidic acid (LPA). This enzyme utilizes acyl-phosphate as fatty acyl donor, but not acyl-CoA or acyl-ACP. The chain is Glycerol-3-phosphate acyltransferase 1 from Oceanobacillus iheyensis (strain DSM 14371 / CIP 107618 / JCM 11309 / KCTC 3954 / HTE831).